The chain runs to 141 residues: Large ribosomal subunit protein uL11 (141 aa).

The protein belongs to the universal ribosomal protein uL11 family. Part of the ribosomal stalk of the 50S ribosomal subunit. Interacts with L10 and the large rRNA to form the base of the stalk. L10 forms an elongated spine to which L12 dimers bind in a sequential fashion forming a multimeric L10(L12)X complex. Post-translationally, one or more lysine residues are methylated.

Its function is as follows. Forms part of the ribosomal stalk which helps the ribosome interact with GTP-bound translation factors. This chain is Large ribosomal subunit protein uL11, found in Streptococcus suis (strain 05ZYH33).